A 428-amino-acid chain; its full sequence is Elongation factor 1-alpha (428 aa).

The tr-type G domain occupies Lys-5–Thr-225. A G1 region spans residues Gly-14–Ser-21. Gly-14–Ser-21 serves as a coordination point for GTP. Ser-21 provides a ligand contact to Mg(2+). Residues Gly-70–Asp-74 are G2. Residues Asp-91 to Gly-94 are G3. Residues Asp-91–His-95 and Asn-149–Asp-152 contribute to the GTP site. Positions Asn-149–Asp-152 are G4. The segment at Ala-189–Leu-191 is G5.

Belongs to the TRAFAC class translation factor GTPase superfamily. Classic translation factor GTPase family. EF-Tu/EF-1A subfamily.

It localises to the cytoplasm. It carries out the reaction GTP + H2O = GDP + phosphate + H(+). GTP hydrolase that promotes the GTP-dependent binding of aminoacyl-tRNA to the A-site of ribosomes during protein biosynthesis. This is Elongation factor 1-alpha from Methanococcus maripaludis (strain C5 / ATCC BAA-1333).